We begin with the raw amino-acid sequence, 747 residues long: DNA repair and recombination protein RAD54-like (747 aa).

The tract at residues 1-42 (MRRSLAPSQLARRKPEDRSSDDEDWQPGTVTPKKRKSSSETQ) is disordered. The tract at residues 2–9 (RRSLAPSQ) is required for chromatin remodeling, strand pairing activities and coupling of ATPase activity. Position 38 is a phosphoserine (Ser-38). Residues 170–345 (SRRIPGSHGC…FSLVHFVNSG (176 aa)) form the Helicase ATP-binding domain. ATP is bound at residue 183–190 (DEMGLGKT). The DEGH box signature appears at 296–299 (DEGH). One can recognise a Helicase C-terminal domain in the interval 500 to 653 (VLDYILAVTR…CVVDEEQDVE (154 aa)). Position 515 is an N6-acetyllysine (Lys-515). Ser-572 carries the post-translational modification Phosphoserine; by NEK1.

Belongs to the SNF2/RAD54 helicase family. In terms of assembly, homohexamer. Interacts (via N-terminus) with RAD51. Interacts with NAP1L1. Interacts with BRD9; this interaction orchestrates RAD51-RAD54 complex formation. Acetylated. Acetylation promotes interaction with BRD9, and subsequently with RAD54, which is essential for homologous recombination (HR). In terms of processing, phosphorylated. Phosphorylation at Ser-572 by NEK1 specifically in G2 phase allows efficient removal of RAD51 filaments from DNA. In terms of tissue distribution, hardly detectable in most tissues. Dramatically increased in thymus, spleen and testis.

It is found in the nucleus. It carries out the reaction ATP + H2O = ADP + phosphate + H(+). Plays an essential role in homologous recombination (HR) which is a major pathway for repairing DNA double-strand breaks (DSBs), single-stranded DNA (ssDNA) gaps, and stalled or collapsed replication forks. Acts as a molecular motor during the homology search and guides RAD51 ssDNA along a donor dsDNA thereby changing the homology search from the diffusion-based mechanism to a motor-guided mechanism. Plays also an essential role in RAD51-mediated synaptic complex formation which consists of three strands encased in a protein filament formed once homology is recognized. Once DNA strand exchange occured, dissociates RAD51 from nucleoprotein filaments formed on dsDNA. Deficiency also resulted in an increased frequency of end-to-end chromosome fusions involving telomeres compared to the controls, suggesting a putative role in telomere capping. Non-homologous end joining (NHEJ) and homologous recombination (HR) represent the two major pathways of DNA double-strand break (DSB) repair in eukaryotic cells. LIG4 and RAD54L cooperate to support cellular proliferation, repair spontaneous DSBs, and prevent chromosome and single chromatid aberrations. In Mus musculus (Mouse), this protein is DNA repair and recombination protein RAD54-like (Rad54l).